We begin with the raw amino-acid sequence, 79 residues long: Beta-defensin 15 (79 aa).

The signal sequence occupies residues M1–A20. Cystine bridges form between C26-C53, C33-C47, and C37-C54.

It belongs to the beta-defensin family.

Its subcellular location is the secreted. In terms of biological role, has antibacterial activity. This is Beta-defensin 15 (Defb15) from Rattus norvegicus (Rat).